A 361-amino-acid polypeptide reads, in one-letter code: tRNA N6-adenosine threonylcarbamoyltransferase (361 aa).

Fe cation contacts are provided by His-110 and His-114. Residues 132–136, Asp-165, Gly-178, Asp-182, and Asn-284 each bind substrate; that span reads LVSGG. Asp-312 is a Fe cation binding site.

Belongs to the KAE1 / TsaD family. Fe(2+) serves as cofactor.

Its subcellular location is the cytoplasm. It carries out the reaction L-threonylcarbamoyladenylate + adenosine(37) in tRNA = N(6)-L-threonylcarbamoyladenosine(37) in tRNA + AMP + H(+). Its function is as follows. Required for the formation of a threonylcarbamoyl group on adenosine at position 37 (t(6)A37) in tRNAs that read codons beginning with adenine. Is involved in the transfer of the threonylcarbamoyl moiety of threonylcarbamoyl-AMP (TC-AMP) to the N6 group of A37, together with TsaE and TsaB. TsaD likely plays a direct catalytic role in this reaction. This Desulfovibrio desulfuricans (strain ATCC 27774 / DSM 6949 / MB) protein is tRNA N6-adenosine threonylcarbamoyltransferase.